A 528-amino-acid polypeptide reads, in one-letter code: UDP-glucuronosyltransferase 1A9 (528 aa).

The signal sequence occupies residues 1-23 (MAPVAFPTSFFLCLLLASGLAQA). N-linked (GlcNAc...) asparagine glycosylation occurs at Asn-69. An N6-succinyllysine modification is found at Lys-97. Residues Asn-290 and Asn-428 are each glycosylated (N-linked (GlcNAc...) asparagine). Residues 486-506 (VIGFLLAIVLTVVFIVFKCCA) traverse the membrane as a helical segment.

This sequence belongs to the UDP-glycosyltransferase family. In terms of assembly, homodimer. Homooligomer. Interacts with UGT1A1, UGT1A3, UGT1A4, UGT1A6, UGT1A7, UGT1A8 and UGT1A10 to form heterodimers. In terms of tissue distribution, highly expressed in liver and at lower levels in stomach and kidney.

The protein localises to the endoplasmic reticulum membrane. The catalysed reaction is glucuronate acceptor + UDP-alpha-D-glucuronate = acceptor beta-D-glucuronoside + UDP + H(+). The enzyme catalyses 2-hydroxy-17beta-estradiol + UDP-alpha-D-glucuronate = 2-hydroxy-17beta-estradiol 3-O-(beta-D-glucuronate) + UDP + H(+). It carries out the reaction 4-hydroxy-17beta-estradiol + UDP-alpha-D-glucuronate = 17beta-estradiol 4-O-(beta-D-glucuronate) + UDP + H(+). It catalyses the reaction 2-hydroxyestrone + UDP-alpha-D-glucuronate = 2-hydroxyestrone 3-O-(beta-D-glucuronate) + UDP + H(+). The catalysed reaction is 4-hydroxyestrone + UDP-alpha-D-glucuronate = estrone 4-O-(beta-D-glucuronate) + UDP + H(+). The enzyme catalyses prunetin + UDP-alpha-D-glucuronate = prunetin-5-O-beta-D-glucuronide + UDP. It carries out the reaction 8-iso-prostaglandin F2alpha + UDP-alpha-D-glucuronate = 8-iso-prostaglandin F2alpha-glucuronide + UDP + H(+). It catalyses the reaction 5-epi-5-F2t-IsoP + UDP-alpha-D-glucuronate = 5-epi-5-F2t-IsoP-glucuronide + UDP + H(+). The catalysed reaction is (5Z,8Z,11Z,14Z)-eicosatetraenoate + UDP-alpha-D-glucuronate = O-[(5Z),(8Z),(11Z),(14Z)-eicosatetraenoyl]-beta-D-glucuronate + UDP. The enzyme catalyses 15-hydroxy-(5Z,8Z,11Z,13E)-eicosatetraenoate + UDP-alpha-D-glucuronate = 15-O-(beta-D-glucuronosyl)-(5Z,8Z,11Z,14Z)-eicosatetraenoate + UDP + H(+). It carries out the reaction prostaglandin B1 + UDP-alpha-D-glucuronate = 15-O-(beta-D-glucuronosyl)-prostaglandin B1 + UDP + H(+). It catalyses the reaction (E)-ferulate + UDP-alpha-D-glucuronate = (E)-4-O-(beta-D-glucuronosyl)-ferulate + UDP + H(+). The catalysed reaction is (E)-ferulate + UDP-alpha-D-glucuronate = (E)-ferulic acid beta-D-glucuronate ester + UDP. The enzyme catalyses candesartan + UDP-alpha-D-glucuronate = candesartan O-beta-D-glucuronoside + UDP. It carries out the reaction SN-38 + UDP-alpha-D-glucuronate = SN-38 O-beta-D-glucuronide + UDP + H(+). It catalyses the reaction mycophenolate + UDP-alpha-D-glucuronate = mycophenolate 7-O-beta-D-glucuronide + UDP + H(+). UDP-glucuronosyltransferase (UGT) that catalyzes phase II biotransformation reactions in which lipophilic substrates are conjugated with glucuronic acid to increase the metabolite's water solubility, thereby facilitating excretion into either the urine or bile. Essential for the elimination and detoxification of drugs, xenobiotics and endogenous compounds. Catalyzes the glucuronidation of endogenous estrogen hormones such as estradiol and estrone. Involved in the glucuronidation of arachidonic acid (AA) and AA-derived eicosanoids including 15-HETE, PGB1 and F2-isoprostanes (8-iso-PGF2alpha and 5-epi-5-F2t-IsoP). Glucuronates the phytochemical ferulic acid efficently at both the phenolic or the carboxylic acid group. Also catalyzes the glucuronidation of the isoflavones genistein, daidzein, glycitein, formononetin, biochanin A and prunetin, which are phytoestrogens with anticancer and cardiovascular properties. Involved in the glucuronidation of the AGTR1 angiotensin receptor antagonist caderastan, a drug which can inhibit the effect of angiotensin II. Involved in the biotransformation of 7-ethyl-10-hydroxycamptothecin (SN-38), the pharmacologically active metabolite of the anticancer drug irinotecan. Also metabolizes mycophenolate, an immunosuppressive agent. This is UDP-glucuronosyltransferase 1A9 from Mus musculus (Mouse).